A 673-amino-acid chain; its full sequence is MSAETATSPAPAAETPVAPAPATQTTPAEGAPTPAAAAPGGNTVSASLYVGELDPSVTEAMLFEIFNMIGPVASIRVCRDAVTRRSLGYAYVNYLNAADGERALEHLNYSLIKGQSCRIMWSQRDPALRKTGQGNIFIKNLDQSIDNKALHDTFAAFGDILSCKVGTDENGKSRGFAFVHYSTGEAADAAIKAVNGMLLNDKKVYVGHHVGKKERLSKVEELRAQFTNVYIKNVDLEVTDAEFEDLVKPFGPTISVALSRDEKGVSKGFGFVNYENHESARKAVDELNEKEVNGKKLYAGRAQTKSEREAELKKSHEEKRLENEAKSAGVNLYVKNLDDEWDDDRLRAEFEAFGTITSSKVMRDDSGVSRGFGFVCYSSPDEATKAVSEMNGKMIGTKPLYVALAQRKDVRRQALESQIAQRAQQRMQYGAGFPGMQGYMGQPMYGYPPMPGYGQPMPGMPPVRGPMMGYPGAPQNMMQSRPRFNPNGQPLPGGVPAYGMPPQVPYPGAPGYPVRPGGARIPAAPNANGPRNGGPSPVGAPQGLPAGSIPRGGQMPARPHEQAAPAPQAGRLDAQSLARAAPAEQKQMLGEALYPLIHETQPELAGKITGMLLEMDNAELLHLVESQPALQEKVDEALRVLAEWGKDEKPAADEGAEEPKKEEEETKEEEKKE.

The interval 1-39 is disordered; the sequence is MSAETATSPAPAAETPVAPAPATQTTPAEGAPTPAAAAP. RRM domains are found at residues 46–124, 134–211, 227–304, and 330–407; these read ASLY…WSQR, GNIF…HHVG, TNVY…RAQT, and VNLY…LAQR. The interval 300-322 is disordered; sequence GRAQTKSEREAELKKSHEEKRLE. The segment covering 304–322 has biased composition (basic and acidic residues); that stretch reads TKSEREAELKKSHEEKRLE. Disordered stretches follow at residues 509–572 and 644–673; these read APGY…AGRL and WGKD…EKKE. The 78-residue stretch at 569 to 646 folds into the PABC domain; it reads AGRLDAQSLA…ALRVLAEWGK (78 aa).

It belongs to the polyadenylate-binding protein type-1 family.

The protein resides in the cytoplasm. It is found in the nucleus. Binds the poly(A) tail of mRNA. Appears to be an important mediator of the multiple roles of the poly(A) tail in mRNA biogenesis, stability and translation. In the nucleus, involved in both mRNA cleavage and polyadenylation. Is also required for efficient mRNA export to the cytoplasm. Acts in concert with a poly(A)-specific nuclease (PAN) to affect poly(A) tail shortening, which may occur concomitantly with either nucleocytoplasmic mRNA transport or translational initiation. In the cytoplasm, stimulates translation initiation and regulates mRNA decay through translation termination-coupled poly(A) shortening, probably mediated by PAN. The sequence is that of Polyadenylate-binding protein, cytoplasmic and nuclear (PAB1) from Cryptococcus neoformans var. neoformans serotype D (strain B-3501A) (Filobasidiella neoformans).